The sequence spans 678 residues: Protein CASP (678 aa).

The Cytoplasmic segment spans residues 1-619 (MAANVGSMSQ…LILSNKTART (619 aa)). Coiled coils occupy residues 16–40 (DLQQ…ESEQ), 67–374 (LLKS…TLKS), 427–454 (HLTE…TIQS), and 502–556 (LSII…FLQS). A Phosphoserine modification is found at S586. A helical; Anchor for type IV membrane protein transmembrane segment spans residues 620-640 (IGFFYTLFLHCLVFLVLYKLA). Topologically, residues 641–678 (WSESVERDCAATCAKKFADHLHKFHESDNGAAAGDLWQ) are lumenal.

This sequence belongs to the CASP family. Homodimer; disulfide-linked. Interacts with GOLGA5. In terms of tissue distribution, ubiquitously expressed.

The protein localises to the golgi apparatus membrane. May be involved in intra-Golgi retrograde transport. This Mus musculus (Mouse) protein is Protein CASP (Cux1).